Here is a 473-residue protein sequence, read N- to C-terminus: Fumarate hydratase class II (473 aa).

Substrate contacts are provided by residues 105–107 (SGT), 130–133 (HPND), 140–142 (SSN), and T188. H189 serves as the catalytic Proton donor/acceptor. The active site involves S319. Residues S320 and 325-327 (KVN) each bind substrate.

It belongs to the class-II fumarase/aspartase family. Fumarase subfamily. As to quaternary structure, homotetramer.

The protein localises to the cytoplasm. It carries out the reaction (S)-malate = fumarate + H2O. It participates in carbohydrate metabolism; tricarboxylic acid cycle; (S)-malate from fumarate: step 1/1. Functionally, involved in the TCA cycle. Catalyzes the stereospecific interconversion of fumarate to L-malate. This is Fumarate hydratase class II from Xylella fastidiosa (strain Temecula1 / ATCC 700964).